We begin with the raw amino-acid sequence, 94 residues long: uncharacterized protein (94 aa).

Belongs to the phage portal family. HK97 subfamily.

This is an uncharacterized protein from Rickettsia conorii (strain ATCC VR-613 / Malish 7).